Consider the following 485-residue polypeptide: NADH-quinone oxidoreductase subunit N (485 aa).

14 helical membrane-spanning segments follow: residues 8 to 28, 35 to 55, 71 to 91, 105 to 125, 127 to 147, 159 to 179, 203 to 223, 235 to 255, 271 to 291, 297 to 317, 326 to 346, 373 to 393, 408 to 430, and 455 to 475; these read LIAL…MLSI, FLNA…LWFV, GFAM…CTFA, FYLL…ANHL, ALFL…GYAF, YTIL…LVYA, LLAG…LVPF, PAPV…GVVM, IVLG…ALSQ, LLGY…IALQ, VGVY…VVSL, AAVM…LGFI, WWLV…RVAV, and IVVL…QPLI.

Belongs to the complex I subunit 2 family. As to quaternary structure, NDH-1 is composed of 13 different subunits. Subunits NuoA, H, J, K, L, M, N constitute the membrane sector of the complex.

It localises to the cell inner membrane. It carries out the reaction a quinone + NADH + 5 H(+)(in) = a quinol + NAD(+) + 4 H(+)(out). In terms of biological role, NDH-1 shuttles electrons from NADH, via FMN and iron-sulfur (Fe-S) centers, to quinones in the respiratory chain. The immediate electron acceptor for the enzyme in this species is believed to be ubiquinone. Couples the redox reaction to proton translocation (for every two electrons transferred, four hydrogen ions are translocated across the cytoplasmic membrane), and thus conserves the redox energy in a proton gradient. This is NADH-quinone oxidoreductase subunit N from Citrobacter koseri (strain ATCC BAA-895 / CDC 4225-83 / SGSC4696).